Here is a 75-residue protein sequence, read N- to C-terminus: Beta-defensin 30 (75 aa).

An N-terminal signal peptide occupies residues 1 to 22 (MGSLQLTLVLFVLLSYVPPVRS). Disulfide bonds link Cys-35/Cys-62, Cys-42/Cys-56, and Cys-46/Cys-63.

It belongs to the beta-defensin family.

Its subcellular location is the secreted. Functionally, has antibacterial activity. The protein is Beta-defensin 30 (Defb30) of Mus musculus (Mouse).